A 360-amino-acid polypeptide reads, in one-letter code: Alanine racemase (360 aa).

K34 acts as the Proton acceptor; specific for D-alanine in catalysis. K34 is modified (N6-(pyridoxal phosphate)lysine). Residue R129 participates in substrate binding. Y254 acts as the Proton acceptor; specific for L-alanine in catalysis. A substrate-binding site is contributed by M302.

Belongs to the alanine racemase family. Pyridoxal 5'-phosphate serves as cofactor.

The enzyme catalyses L-alanine = D-alanine. The protein operates within amino-acid biosynthesis; D-alanine biosynthesis; D-alanine from L-alanine: step 1/1. Functionally, catalyzes the interconversion of L-alanine and D-alanine. May also act on other amino acids. The polypeptide is Alanine racemase (alr) (Pectobacterium carotovorum subsp. carotovorum (strain PC1)).